We begin with the raw amino-acid sequence, 734 residues long: Histone-lysine N-methyltransferase SET9 (734 aa).

One can recognise an SET domain in the interval 116–230; it reads CPFEVNATNR…LGEEITVTYS (115 aa). Disordered stretches follow at residues 343-459, 523-543, 567-591, and 681-734; these read FDTT…TTET, AVPNSAPSQIQEAENNAQQGA, AVSTKKKKRRVSEKPAPEPVRKQRV, and RKPW…AMAQ. The span at 407–418 shows a compositional bias: basic and acidic residues; it reads EEPKPPSMREKP. A compositionally biased stretch (polar residues) spans 527 to 543; that stretch reads SAPSQIQEAENNAQQGA. Residues 578–587 show a composition bias toward basic and acidic residues; that stretch reads SEKPAPEPVR.

It belongs to the class V-like SAM-binding methyltransferase superfamily. Histone-lysine methyltransferase family. Suvar4-20 subfamily.

It localises to the nucleus. Its subcellular location is the chromosome. It carries out the reaction L-lysyl(20)-[histone H4] + 3 S-adenosyl-L-methionine = N(6),N(6),N(6)-trimethyl-L-lysyl(20)-[histone H4] + 3 S-adenosyl-L-homocysteine + 3 H(+). Histone methyltransferase that trimethylates 'Lys-20' of histone H4 to form H4K20me3. The protein is Histone-lysine N-methyltransferase SET9 (SET9) of Chaetomium globosum (strain ATCC 6205 / CBS 148.51 / DSM 1962 / NBRC 6347 / NRRL 1970) (Soil fungus).